A 137-amino-acid chain; its full sequence is Peptide methionine sulfoxide reductase MsrB (137 aa).

The region spanning 7–129 (PTENIEKLSD…NSASLNFVDD (123 aa)) is the MsrB domain. Zn(2+) contacts are provided by Cys46, Cys49, Cys95, and Cys98. The active-site Nucleophile is Cys118.

This sequence belongs to the MsrB Met sulfoxide reductase family. Zn(2+) is required as a cofactor.

It carries out the reaction L-methionyl-[protein] + [thioredoxin]-disulfide + H2O = L-methionyl-(R)-S-oxide-[protein] + [thioredoxin]-dithiol. The sequence is that of Peptide methionine sulfoxide reductase MsrB from Yersinia pseudotuberculosis serotype O:1b (strain IP 31758).